The primary structure comprises 3799 residues: Polyketide synthase GfsE (3799 aa).

One can recognise a Ketosynthase family 3 (KS3) 1 domain in the interval 33–459 (HEPIAIIGMS…GTNAHAILEE (427 aa)). Module stretches follow at residues 33–1730 (HEPI…RSSA) and 1749–3494 (DEAI…RTDL). Active-site for beta-ketoacyl synthase 1 activity residues include cysteine 206, histidine 341, and histidine 381. The interval 462–496 (AATGNPTEADTDQEPAASASPDRTTTLPAVPWPLS) is disordered. The 314-residue stretch at 582-895 (FVFPGQGSQW…LGEAHAHGAD (314 aa)) folds into the Malonyl-CoA:ACP transacylase (MAT) 1 domain. The N-terminal hotdog fold 1 stretch occupies residues 944 to 1069 (HPLFGAVVEV…GVLELEARPE (126 aa)). Residues 944–1222 (HPLFGAVVEV…SRPVAEEQLG (279 aa)) enclose the PKS/mFAS DH 1 domain. Histidine 976 functions as the Proton acceptor; for dehydratase activity 1 in the catalytic mechanism. Residues 1081-1222 (AEVVPVEGLY…SRPVAEEQLG (142 aa)) form a C-terminal hotdog fold 1 region. Aspartate 1142 functions as the Proton donor; for dehydratase activity 1 in the catalytic mechanism. The Ketoreductase (KR) 1 domain occupies 1382-1554 (LLVTGASGVL…TSLSWGLWAE (173 aa)). Positions 1652–1730 (EAERAVLELV…ALATHIRSSA (79 aa)) constitute a Carrier 1 domain. Serine 1690 bears the O-(pantetheine 4'-phosphoryl)serine mark. The Ketosynthase family 3 (KS3) 2 domain maps to 1749–2174 (DEAIAIVGMA…GTNAHVILEQ (426 aa)). Catalysis depends on for beta-ketoacyl synthase 2 activity residues cysteine 1921, histidine 2056, and histidine 2096. In terms of domain architecture, Malonyl-CoA:ACP transacylase (MAT) 2 spans 2284 to 2604 (FVFPGQGSQW…VSLAKVHTHG (321 aa)). An N-terminal hotdog fold 2 region spans residues 2656–2781 (HPLLTGVVDL…GTLAVDADHD (126 aa)). The PKS/mFAS DH 2 domain occupies 2656–2936 (HPLLTGVVDL…TRPVTAAQFA (281 aa)). Histidine 2688 acts as the Proton acceptor; for dehydratase activity 2 in catalysis. Residues 2794 to 2936 (ADPVDLTEVY…TRPVTAAQFA (143 aa)) are C-terminal hotdog fold 2. The Proton donor; for dehydratase activity 2 role is filled by aspartate 2855. Residues 3142-3314 (LLVTGASGVL…TALSWGLWAE (173 aa)) form the Ketoreductase (KR) 2 domain. The 76-residue stretch at 3419–3494 (AALLDLVGAQ…ALAAQLRTDL (76 aa)) folds into the Carrier 2 domain. O-(pantetheine 4'-phosphoryl)serine is present on serine 3454.

Requires pantetheine 4'-phosphate as cofactor.

The protein operates within antibiotic biosynthesis. Functionally, fifth protein in the synthesis of the 16-membered macrolide antibiotics FD-891 and FD-892. Composed of 2 modules. Modifies the product of GfsD by multiple rounds of addition of methylmalonyl-CoA and other modifications to help generate the final products. This Streptomyces halstedii protein is Polyketide synthase GfsE.